The chain runs to 263 residues: 3'-5' ssDNA/RNA exonuclease TatD (263 aa).

A divalent metal cation-binding residues include E91, H127, and H152.

Belongs to the metallo-dependent hydrolases superfamily. TatD-type hydrolase family. TatD subfamily. As to quaternary structure, monomer. Requires Mg(2+) as cofactor.

The protein resides in the cytoplasm. 3'-5' exonuclease that prefers single-stranded DNA and RNA. May play a role in the H(2)O(2)-induced DNA damage repair. This is 3'-5' ssDNA/RNA exonuclease TatD from Citrobacter rodentium (strain ICC168) (Citrobacter freundii biotype 4280).